The sequence spans 465 residues: uncharacterized protein (465 aa).

The span at 1 to 15 (MEKNYIFENSIYKDE) shows a compositional bias: basic and acidic residues. 2 disordered regions span residues 1–31 (MEKN…NNSS) and 288–320 (QLEK…EQLP).

This is an uncharacterized protein from Dictyostelium discoideum (Social amoeba).